A 166-amino-acid polypeptide reads, in one-letter code: Large ribosomal subunit protein uL10 (166 aa).

It belongs to the universal ribosomal protein uL10 family. Part of the ribosomal stalk of the 50S ribosomal subunit. The N-terminus interacts with L11 and the large rRNA to form the base of the stalk. The C-terminus forms an elongated spine to which L12 dimers bind in a sequential fashion forming a multimeric L10(L12)X complex.

Its function is as follows. Forms part of the ribosomal stalk, playing a central role in the interaction of the ribosome with GTP-bound translation factors. This is Large ribosomal subunit protein uL10 from Pseudomonas fluorescens (strain ATCC BAA-477 / NRRL B-23932 / Pf-5).